A 254-amino-acid polypeptide reads, in one-letter code: MKITAIIPARYASTRFPGKALAEIIGKPMVQHVYERTAKAGLVSEVIVATDDERVAEAVRAFGGRVEMTSATHETGTDRLAEVAARIDADIIVNVQGDEPLIEPAMIDEAIAPLVADASIRMGTLKSRIKSLHDFLSPNVVKVVTDREGDALYFSRSPLPNFRDKWNDLKDEAFVTGRLLCYKHVGLYVYRRDFLLAFARMAPTPLELAEKLEQLRVLENGFRIRVVETSFESIGVDTPSDLDKVVEKLSRFQI.

It belongs to the KdsB family.

The protein resides in the cytoplasm. It carries out the reaction 3-deoxy-alpha-D-manno-oct-2-ulosonate + CTP = CMP-3-deoxy-beta-D-manno-octulosonate + diphosphate. The protein operates within nucleotide-sugar biosynthesis; CMP-3-deoxy-D-manno-octulosonate biosynthesis; CMP-3-deoxy-D-manno-octulosonate from 3-deoxy-D-manno-octulosonate and CTP: step 1/1. It functions in the pathway bacterial outer membrane biogenesis; lipopolysaccharide biosynthesis. In terms of biological role, activates KDO (a required 8-carbon sugar) for incorporation into bacterial lipopolysaccharide in Gram-negative bacteria. The protein is 3-deoxy-manno-octulosonate cytidylyltransferase of Geobacter metallireducens (strain ATCC 53774 / DSM 7210 / GS-15).